Here is a 443-residue protein sequence, read N- to C-terminus: Amino-acid acetyltransferase (443 aa).

In terms of domain architecture, N-acetyltransferase spans 296 to 443; the sequence is EQIRRATIND…RSKVLMADLG (148 aa).

The protein belongs to the acetyltransferase family. ArgA subfamily. As to quaternary structure, homohexamer.

The protein resides in the cytoplasm. It catalyses the reaction L-glutamate + acetyl-CoA = N-acetyl-L-glutamate + CoA + H(+). It functions in the pathway amino-acid biosynthesis; L-arginine biosynthesis; N(2)-acetyl-L-ornithine from L-glutamate: step 1/4. The sequence is that of Amino-acid acetyltransferase (argA) from Salmonella typhi.